Reading from the N-terminus, the 414-residue chain is Putative competence-damage inducible protein (414 aa).

This sequence belongs to the CinA family.

The sequence is that of Putative competence-damage inducible protein from Limosilactobacillus fermentum (strain NBRC 3956 / LMG 18251) (Lactobacillus fermentum).